We begin with the raw amino-acid sequence, 197 residues long: Sodium/potassium-transporting ATPase subunit beta-1-interacting protein 3 (197 aa).

A run of 4 helical transmembrane segments spans residues 2–22 (GCCTGRCSLICLCALQLVSAL), 35–55 (APILGNFLHIIVVILGLFGTI), 62–82 (IMVYTVWTALWVTWNVFIICF), and 152–172 (VQILLSLVGFVYACYVISISM).

The protein belongs to the NKAIN family. In terms of assembly, interacts with ATP1B1.

The protein localises to the cell membrane. The sequence is that of Sodium/potassium-transporting ATPase subunit beta-1-interacting protein 3 (NKAIN3) from Homo sapiens (Human).